We begin with the raw amino-acid sequence, 186 residues long: MKTAQELRVGNVVMIGTDAQVVLKAEYSRSGRNSSVVKMKFKNLLTGAPNEGVYKADDKFDVVILDKKECTYSYFADPMYVFMDGDYNQYEVEAEFMGDALNYLEESMPCEVVFYEGKALSVAMPNSLVREIIYTEPAVKGDTSSGKVLKNAKLATGYELQVPLFCNTGDKIEIDTRTGEYRSRAN.

This sequence belongs to the elongation factor P family.

The protein resides in the cytoplasm. It functions in the pathway protein biosynthesis; polypeptide chain elongation. Involved in peptide bond synthesis. Stimulates efficient translation and peptide-bond synthesis on native or reconstituted 70S ribosomes in vitro. Probably functions indirectly by altering the affinity of the ribosome for aminoacyl-tRNA, thus increasing their reactivity as acceptors for peptidyl transferase. This is Elongation factor P from Polynucleobacter necessarius subsp. necessarius (strain STIR1).